A 148-amino-acid chain; its full sequence is Putative pre-16S rRNA nuclease (148 aa).

It belongs to the YqgF nuclease family.

Its subcellular location is the cytoplasm. Its function is as follows. Could be a nuclease involved in processing of the 5'-end of pre-16S rRNA. The sequence is that of Putative pre-16S rRNA nuclease from Chlamydia trachomatis serovar A (strain ATCC VR-571B / DSM 19440 / HAR-13).